Consider the following 1383-residue polypeptide: DNA-directed RNA polymerase subunit beta (1383 aa).

Belongs to the RNA polymerase beta chain family. The RNAP catalytic core consists of 2 alpha, 1 beta, 1 beta' and 1 omega subunit. When a sigma factor is associated with the core the holoenzyme is formed, which can initiate transcription.

The enzyme catalyses RNA(n) + a ribonucleoside 5'-triphosphate = RNA(n+1) + diphosphate. In terms of biological role, DNA-dependent RNA polymerase catalyzes the transcription of DNA into RNA using the four ribonucleoside triphosphates as substrates. The protein is DNA-directed RNA polymerase subunit beta of Bartonella henselae (strain ATCC 49882 / DSM 28221 / CCUG 30454 / Houston 1) (Rochalimaea henselae).